Reading from the N-terminus, the 156-residue chain is Small ribosomal subunit protein uS7 (156 aa).

It belongs to the universal ribosomal protein uS7 family. Part of the 30S ribosomal subunit. Contacts proteins S9 and S11.

Its function is as follows. One of the primary rRNA binding proteins, it binds directly to 16S rRNA where it nucleates assembly of the head domain of the 30S subunit. Is located at the subunit interface close to the decoding center, probably blocks exit of the E-site tRNA. This Solidesulfovibrio magneticus (strain ATCC 700980 / DSM 13731 / RS-1) (Desulfovibrio magneticus) protein is Small ribosomal subunit protein uS7.